Reading from the N-terminus, the 643-residue chain is Sodium-dependent nutrient amino acid transporter 1 (643 aa).

A disordered region spans residues 1-38; that stretch reads MELKGVQPSNGSPNGNGNGATNAASTEKTDAEKPTAER. Residues 1–40 are Cytoplasmic-facing; it reads MELKGVQPSNGSPNGNGNGATNAASTEKTDAEKPTAERTN. The segment covering 8-26 has biased composition (low complexity); that stretch reads PSNGSPNGNGNGATNAAST. Residues 27–36 show a composition bias toward basic and acidic residues; sequence EKTDAEKPTA. 3 helical membrane-spanning segments follow: residues 41–61, 74–94, and 111–131; these read WGNGLEFLMSCISVSVGLGNV, GAFLIPYIIVLFLIGKPMYYL, and SVVPGFVGVGYGQAFGTICII. Asn185, Asn190, and Asn200 each carry an N-linked (GlcNAc...) asparagine glycan. The next 9 membrane-spanning stretches (helical) occupy residues 231–251, 260–280, 309–329, 343–363, 403–423, 449–469, 476–496, 518–538, and 554–574; these read PDWKLTLALFVAWVVIFLVIM, AAYFLALFPYVVLFVLLIRAV, AVVQCFFSLAVGSGPIIMFAS, IVTTLDTLTSLLGGITIFAIL, LFSVLFFFMLFVLGIGSIVAL, VCGFLMGLVYVTPGGQWILTL, TYVVFILAIFELAGIVWVYGL, CWSFFTPVMMIIIFIYSMATI, and VAGWLLFAIGAAQFPLWGLWY.

This sequence belongs to the sodium:neurotransmitter symporter (SNF) (TC 2.A.22) family.

Its subcellular location is the membrane. Its function is as follows. Unusual broad substrate spectrum amino acid:sodium cotransporter that promotes absorption of the D isomers of essential amino acids. Neutral amino acids are the preferred substrates, especially methionine and phenylalanine. The protein is Sodium-dependent nutrient amino acid transporter 1 of Drosophila simulans (Fruit fly).